Here is a 699-residue protein sequence, read N- to C-terminus: MCGIFGYANFSKERSKDEIANIMINGLKRIEYRGYDSAGFCITDNTDRNFARIRAVGKVNSLYEIKNSQTSVDLTRKVLNHVSIAHTRWATHGQPSIENSHPLSSDENNSFLVVHNGIITNYKDLKVYLKKKGFTFESDTDTECAAKLALYFYREMERKKEETDFVAIVKNVVKHCEGAFAFVFASSLFPNELVTVRKSSPVLIGLKPSGKMSFDFFGVNYGDPADDTPTSLLDSPLAFSKSDRHGFDQNIDMMTRDVQDCTLHAHNKEPLEVFVASDASALIEHTRKVIFLEDNDIVHISNGNISIHRMHSKAKESGPEIREVKTIETELAAIMKGNYDHYMIKEINEQEESVVNTMRGRINFESLTVSLGGLKDHVSGIRKSQRIIFVACGTSYHASLANRALLEELLEIPVSVEIASDFLDRAPPIMRSDCVFFVSQSGETADSVMALRYCMSMGALCVGITNTVGSTISRETACGVHINAGPEIGVASTKAYTSQYIALVLVALQLSDQNLVKQARRREIMEGLKNISSQINRVLELSTSVKSLANGPMKDDASLLLIGRGYQYPTCMEGALKIKEITYIHAEGLAAGELKHGPIALVDDKLRIIFIATKDLLYDKTRNAMEQIFARGGRPIVICTEDISGDYAEYDTFVVPKTVDCLQGILTVIPLQLLSYHLAVAKGYNADFPRNLAKSVTVE.

Cysteine 2 (nucleophile) is an active-site residue. The region spanning 2 to 303 (CGIFGYANFS…DNDIVHISNG (302 aa)) is the Glutamine amidotransferase type-2 domain. SIS domains are found at residues 377-516 (HVSG…QNLV) and 544-689 (SVKS…ADFP).

The enzyme catalyses D-fructose 6-phosphate + L-glutamine = D-glucosamine 6-phosphate + L-glutamate. The protein operates within nucleotide-sugar biosynthesis; UDP-N-acetyl-alpha-D-glucosamine biosynthesis; alpha-D-glucosamine 6-phosphate from D-fructose 6-phosphate: step 1/1. In terms of biological role, involved in amino sugar synthesis (formation of chitin, supplies the amino sugars of asparagine-linked oligosaccharides of glycoproteins). The chain is Glutamine--fructose-6-phosphate aminotransferase [isomerizing] (GFA1) from Encephalitozoon cuniculi (strain GB-M1) (Microsporidian parasite).